We begin with the raw amino-acid sequence, 774 residues long: MRNCRVLLVLVLSLVIVLNVVRASDESKVHIVYLGEKQHDDPEFVSESHHQMLSSLLGSKVDAHESMVYSYRHGFSGFAAKLTESQAKKLADSPEVVHVMADSFYELATTRTWDYLGLSVANPNNLLNDTNMGDQVIIGFIDTGVWPESESFNDNGVGPIPSHWKGGCESGEKFISTNCNRKLIGAKYFINGFLAENEGFNTTESRDYISARDFIGHGTHTASIAGGSFVPNISYKGLAGGNLRGGAPRARIAIYKACWYVDQLGAVACSSSDILKAMDESMHDGVDVLSLSLGAQIPLYPETDLRDRIATGAFHAVAKGIIVVCAGGNSGPAAQTVLNTAPWIITVAATTLDRSFPTPITLGNRKVILGQALYTGQELGFTSLVYPENAGFTNETFSGVCERLNLNPNRTMAGKVVLCFTTNTLFTAVSRAASYVKAAGGLGVIIARNPGYNLTPCRDDFPCVAIDYELGTDVLLYIRSTRSPVVKIQPSRTLVGQPVGTKVATFSSRGPNSISPAILKPDIGAPGVSILAATSPDSNSSVGGFDILAGTSMAAPVVAGVVALLKALHPNWSPAAFRSAIVTTAWRTDPFGEQIFAEGSSRKVADPFDYGGGIVNPEKAADPGLIYDMGPRDYILYLCSAGYNDSSITQLVGNVTVCSTPKTSVLDVNLPSITIPDLKDEVTLTRTVTNVGTVDSVYKVVVEPPLGIQVVVAPETLVFNSKTKNVSFTVRVSTTHKINTGFYFGNLIWTDSMHNVTIPVSVRTQILQNYYDEN.

Residues methionine 1 to alanine 23 form the signal peptide. Positions serine 24–alanine 108 are cleaved as a propeptide — removed in mature form. One can recognise an Inhibitor I9 domain in the interval valine 29–alanine 108. The Peptidase S8 domain maps to threonine 112–alanine 621. N-linked (GlcNAc...) asparagine glycosylation is present at asparagine 128. The active-site Charge relay system is aspartate 142. N-linked (GlcNAc...) asparagine glycosylation is present at asparagine 201. The Charge relay system role is filled by histidine 217. N-linked (GlcNAc...) asparagine glycans are attached at residues asparagine 232, asparagine 394, asparagine 409, and asparagine 539. Positions serine 383 to isoleucine 478 constitute a PA domain. The active-site Charge relay system is the serine 552. N-linked (GlcNAc...) asparagine glycans are attached at residues asparagine 644, asparagine 654, asparagine 725, and asparagine 755.

This sequence belongs to the peptidase S8 family. In terms of tissue distribution, expressed in roots, leaves, stems, flower buds, developing siliques and mature seeds.

The protein localises to the secreted. Its subcellular location is the cell wall. Its function is as follows. Serine protease that cleaves the pectin methylesterase 17 (PME17) protein to release the PME17 mature form in the apoplasm. The sequence is that of Subtilisin-like protease SBT3.5 from Arabidopsis thaliana (Mouse-ear cress).